A 693-amino-acid polypeptide reads, in one-letter code: Elongation factor G 1 (693 aa).

The 278-residue stretch at 4–281 folds into the tr-type G domain; the sequence is NKLRNIGISA…AVTRFLPSPH (278 aa). Residues 13–20, 80–84, and 134–137 each bind GTP; these read AHIDSGKT, DTPGH, and NKCD.

Belongs to the TRAFAC class translation factor GTPase superfamily. Classic translation factor GTPase family. EF-G/EF-2 subfamily.

It localises to the cytoplasm. Its function is as follows. Catalyzes the GTP-dependent ribosomal translocation step during translation elongation. During this step, the ribosome changes from the pre-translocational (PRE) to the post-translocational (POST) state as the newly formed A-site-bound peptidyl-tRNA and P-site-bound deacylated tRNA move to the P and E sites, respectively. Catalyzes the coordinated movement of the two tRNA molecules, the mRNA and conformational changes in the ribosome. The polypeptide is Elongation factor G 1 (Borrelia garinii subsp. bavariensis (strain ATCC BAA-2496 / DSM 23469 / PBi) (Borreliella bavariensis)).